A 1770-amino-acid chain; its full sequence is Transposon Ty2-GR1 Gag-Pol polyprotein (1770 aa).

Polar residues-rich tracts occupy residues 1–11 (MESQQLHQNPH), 19–39 (ASVT…SASN), and 49–60 (KVNSQQETTPGT). Disordered regions lie at residues 1 to 86 (MESQ…GQYQ) and 360 to 453 (HSEY…LPDH). The interval 295–397 (ENNINVSDRL…SSKPRAAKAH (103 aa)) is RNA-binding. Low complexity predominate over residues 369–381 (TSPNTTNTKVTTR). Over residues 399–408 (IATSSKFSRV) the composition is skewed to polar residues. D457 functions as the For protease activity; shared with dimeric partner in the catalytic mechanism. Residues 579–636 (NVNKSKSVNKYPYPLIHRMLGHANFRSIQKSLKKNAVTYLKESDIEWSNASTYQCPDC) form an integrase-type zinc finger-like region. The Integrase catalytic domain occupies 656–831 (ESYEPFQYLH…AGLDITTILP (176 aa)). Mg(2+)-binding residues include D667 and D732. 4 disordered regions span residues 1004–1034 (MGGT…STNE), 1059–1135 (TEEP…KSSK), 1146–1165 (LPLP…VSKD), and 1170–1205 (HSRQ…TEIE). Polar residues-rich tracts occupy residues 1009 to 1034 (ESDT…STNE) and 1065 to 1082 (QRNS…STPS). Residues 1151–1165 (LTHKSPTDTSDVSKD) show a composition bias toward basic and acidic residues. The Bipartite nuclear localization signal signature appears at 1193–1227 (KKRSLEDNETEIEVSRDTWNNKNMRSLEPPRSKKR). Residues 1353–1491 (NDYYITQLDI…DILGLEIKYQ (139 aa)) enclose the Reverse transcriptase Ty1/copia-type domain. D1361, D1442, D1443, D1625, E1667, and D1700 together coordinate Mg(2+). The 143-residue stretch at 1625–1767 (DASYGNQPYY…IKTFKLLTNK (143 aa)) folds into the RNase H Ty1/copia-type domain.

In terms of assembly, the capsid protein forms a homotrimer, from which the VLPs are assembled. The protease is a homodimer, whose active site consists of two apposed aspartic acid residues. In terms of processing, initially, virus-like particles (VLPs) are composed of the structural unprocessed proteins Gag and Gag-Pol, and also contain the host initiator methionine tRNA (tRNA(i)-Met) which serves as a primer for minus-strand DNA synthesis, and a dimer of genomic Ty RNA. Processing of the polyproteins occurs within the particle and proceeds by an ordered pathway, called maturation. First, the protease (PR) is released by autocatalytic cleavage of the Gag-Pol polyprotein, and this cleavage is a prerequisite for subsequent processing at the remaining sites to release the mature structural and catalytic proteins. Maturation takes place prior to the RT reaction and is required to produce transposition-competent VLPs.

It localises to the cytoplasm. The protein localises to the nucleus. It carries out the reaction DNA(n) + a 2'-deoxyribonucleoside 5'-triphosphate = DNA(n+1) + diphosphate. The enzyme catalyses Endonucleolytic cleavage to 5'-phosphomonoester.. Capsid protein (CA) is the structural component of the virus-like particle (VLP), forming the shell that encapsulates the retrotransposons dimeric RNA genome. The particles are assembled from trimer-clustered units and there are holes in the capsid shells that allow for the diffusion of macromolecules. CA also has nucleocapsid-like chaperone activity, promoting primer tRNA(i)-Met annealing to the multipartite primer-binding site (PBS), dimerization of Ty2 RNA and initiation of reverse transcription. In terms of biological role, the aspartyl protease (PR) mediates the proteolytic cleavages of the Gag and Gag-Pol polyproteins after assembly of the VLP. Functionally, reverse transcriptase/ribonuclease H (RT) is a multifunctional enzyme that catalyzes the conversion of the retro-elements RNA genome into dsDNA within the VLP. The enzyme displays a DNA polymerase activity that can copy either DNA or RNA templates, and a ribonuclease H (RNase H) activity that cleaves the RNA strand of RNA-DNA heteroduplexes during plus-strand synthesis and hydrolyzes RNA primers. The conversion leads to a linear dsDNA copy of the retrotransposon that includes long terminal repeats (LTRs) at both ends. Its function is as follows. Integrase (IN) targets the VLP to the nucleus, where a subparticle preintegration complex (PIC) containing at least integrase and the newly synthesized dsDNA copy of the retrotransposon must transit the nuclear membrane. Once in the nucleus, integrase performs the integration of the dsDNA into the host genome. This chain is Transposon Ty2-GR1 Gag-Pol polyprotein (TY2B-GR1), found in Saccharomyces cerevisiae (strain ATCC 204508 / S288c) (Baker's yeast).